An 800-amino-acid polypeptide reads, in one-letter code: Mitochondrial intermediate peptidase (800 aa).

Residues 1–23 constitute a mitochondrion transit peptide; it reads MAGHMLMPLRRRPWTCRACLQRL. Positions 27 to 41 are enriched in polar residues; it reads RRSLETAASPSSQSD. A disordered region spans residues 27–59; that stretch reads RRSLETAASPSSQSDVYDYAPTNHSTQKKSNDE. Residue His-563 participates in Zn(2+) binding. Glu-564 is an active-site residue. Residues His-567 and His-570 each coordinate Zn(2+).

The protein belongs to the peptidase M3 family. Requires Zn(2+) as cofactor.

The protein resides in the mitochondrion matrix. The catalysed reaction is Release of an N-terminal octapeptide as second stage of processing of some proteins imported into the mitochondrion.. Its function is as follows. Cleaves proteins, imported into the mitochondrion, to their mature size. While most mitochondrial precursor proteins are processed to the mature form in one step by mitochondrial processing peptidase (MPP), the sequential cleavage by MIP of an octapeptide after initial processing by MPP is a required step for a subgroup of nuclear-encoded precursor proteins destined for the matrix or the inner membrane. The protein is Mitochondrial intermediate peptidase (oct1) of Aspergillus oryzae (strain ATCC 42149 / RIB 40) (Yellow koji mold).